Consider the following 253-residue polypeptide: uncharacterized protein (253 aa).

The N-terminal stretch at 1–25 is a signal peptide; that stretch reads MRKKKFLSKVSFGSLFLLCGTVLSA. Cys-26 carries N-palmitoyl cysteine lipidation. The S-diacylglycerol cysteine moiety is linked to residue Cys-26.

Belongs to the MG439/MG440 family.

The protein resides in the cell membrane. This is an uncharacterized protein from Mycoplasma pneumoniae (strain ATCC 29342 / M129 / Subtype 1) (Mycoplasmoides pneumoniae).